We begin with the raw amino-acid sequence, 149 residues long: Putative oligosaccharyltransferase complex subunit CG9662 (149 aa).

The Cytoplasmic segment spans residues 1–32 (MIETLYNLPFHILVPPNIKVRRFSIPMPSPMA). Residues 33–53 (VFSVILFSYFLVTGGIIYDVI) form a helical membrane-spanning segment. Residues 54 to 83 (VEPPSLGATVDEHGHSRPVAFMPYRVNGQY) are Extracellular-facing. A helical transmembrane segment spans residues 84–104 (IMEGLASSFLFTVGGLGFIIM). At 105–117 (DQTHTPGKTNLNR) the chain is on the cytoplasmic side. The helical transmembrane segment at 118 to 138 (LLLTAMGFIFILVSFFTTWLF) threads the bilayer. Topologically, residues 139–149 (MRMKLPSYLQP) are extracellular.

This sequence belongs to the OSTC family. In terms of assembly, component of the oligosaccharyltransferase (OST) complex.

It is found in the membrane. Subunit of the oligosaccharyl transferase (OST) complex that catalyzes the initial transfer of a defined glycan (Glc(3)Man(9)GlcNAc(2) in eukaryotes) from the lipid carrier dolichol-pyrophosphate to an asparagine residue within an Asn-X-Ser/Thr consensus motif in nascent polypeptide chains, the first step in protein N-glycosylation. N-glycosylation occurs cotranslationally and the complex associates with the Sec61 complex at the channel-forming translocon complex that mediates protein translocation across the endoplasmic reticulum (ER). All subunits are required for a maximal enzyme activity. The polypeptide is Putative oligosaccharyltransferase complex subunit CG9662 (Drosophila melanogaster (Fruit fly)).